Consider the following 2766-residue polypeptide: PDZ domain-containing protein 2 (2766 aa).

In terms of domain architecture, PDZ 1 spans 85 to 177 (LSFGNIPVFG…GGFIYLIMLR (93 aa)). Disordered stretches follow at residues 189-315 (GNSG…KTGK) and 419-452 (MPGS…KLKS). The span at 242 to 254 (TADDPNSELENGA) shows a compositional bias: acidic residues. Residues 280 to 296 (HLERSEADSEVELRVPK) are compositionally biased toward basic and acidic residues. Residues 334–419 (KMELLKESDG…MVQLVVASKM (86 aa)) form the PDZ 2 domain. Serine 517 carries the post-translational modification Phosphoserine. In terms of domain architecture, PDZ 3 spans 535-621 (IIGLYKEKGK…GLFVLTVRTK (87 aa)). Over residues 627-636 (LTPCSTPTHM) the composition is skewed to polar residues. Positions 627-673 (LTPCSTPTHMSRSSSPSFNTNSGGTPAGGGQEEGGSSSLGRKAPGPK) are disordered. Positions 637-650 (SRSSSPSFNTNSGG) are enriched in low complexity. In terms of domain architecture, PDZ 4 spans 679-764 (EVTLNKEPRV…GPVRLVIGRH (86 aa)). A compositionally biased stretch (polar residues) spans 783–794 (YQESREANSSPG). 2 disordered regions span residues 783–803 (YQES…KSPS) and 834–853 (AGSE…EDGS). Phosphoserine is present on residues serine 891 and serine 895. Disordered regions lie at residues 915-966 (NGGS…KQEE), 990-1425 (HSIL…PSVL), 1456-1531 (ISLS…CPGT), 1725-1909 (DSQG…LPEQ), 1924-1967 (DTSC…IRQS), 2015-2070 (ERVP…ASQV), 2146-2174 (FSSH…AMGG), 2262-2397 (DRPT…ERRT), 2424-2450 (QLEI…GHAD), and 2465-2496 (TRAY…WATP). Over residues 918-927 (SDDEDFDGEG) the composition is skewed to acidic residues. Over residues 1021–1038 (GRKEMSGSRSSPKLEYRV) the composition is skewed to basic and acidic residues. Polar residues-rich tracts occupy residues 1040 to 1061 (TDTQ…SENL), 1126 to 1137 (PGDSSVPTNCGP), and 1189 to 1220 (SETP…SQGI). Low complexity-rich tracts occupy residues 1379–1393 (SQPP…SHHA) and 1456–1471 (ISLS…SPSS). Serine 1767 carries the post-translational modification Phosphoserine. A compositionally biased stretch (basic residues) spans 1797-1806 (CSPKLKRLNS). Over residues 1884-1901 (LRTSASDTSIRTFTSPLT) the composition is skewed to polar residues. Low complexity-rich tracts occupy residues 1924–1937 (DTSC…PRSG) and 1947–1963 (SGSA…ALAG). 2 stretches are compositionally biased toward low complexity: residues 2280–2296 (PPIN…GSPS) and 2305–2321 (RSLS…SSLL). Composition is skewed to polar residues over residues 2322 to 2347 (PQMT…SNKG) and 2362 to 2372 (PTSTVSPASPS). A PDZ 5 domain is found at 2550–2634 (FIVLNKKEGS…HKHALMIIKK (85 aa)). Residues 2635-2667 (GNDQPGPSFKQEPPSANGKGPFPRRTLPLEPGA) are disordered. Residues 2678 to 2763 (CVEVLKTSAG…GPVQLVIRKH (86 aa)) enclose the PDZ 6 domain.

As to quaternary structure, interacts with SCN10A, CTNND2 and PKP4. Post-translationally, a secreted form is produced by caspase-mediated proteolytic cleavage. Expressed in the heart, liver, brain, spleen, lung, kidney, testis and skeletal muscle.

It is found in the nucleus. Its subcellular location is the cytoplasm. The protein localises to the endoplasmic reticulum. It localises to the cell junction. The protein resides in the secreted. The polypeptide is PDZ domain-containing protein 2 (Pdzd2) (Rattus norvegicus (Rat)).